The chain runs to 603 residues: Aspartate--tRNA(Asp/Asn) ligase (603 aa).

The interval 205–208 is aspartate; that stretch reads QLFK. An L-aspartate-binding site is contributed by arginine 227. Residues 227-229 and glutamine 236 each bind ATP; that span reads RDE. Histidine 463 is an L-aspartate binding site. Residue glutamate 497 coordinates ATP. An L-aspartate-binding site is contributed by arginine 504. 549–552 serves as a coordination point for ATP; it reads GMDR.

Belongs to the class-II aminoacyl-tRNA synthetase family. Type 1 subfamily. As to quaternary structure, homodimer.

The protein localises to the cytoplasm. It catalyses the reaction tRNA(Asx) + L-aspartate + ATP = L-aspartyl-tRNA(Asx) + AMP + diphosphate. Aspartyl-tRNA synthetase with relaxed tRNA specificity since it is able to aspartylate not only its cognate tRNA(Asp) but also tRNA(Asn). Reaction proceeds in two steps: L-aspartate is first activated by ATP to form Asp-AMP and then transferred to the acceptor end of tRNA(Asp/Asn). The protein is Aspartate--tRNA(Asp/Asn) ligase of Anaeromyxobacter sp. (strain K).